A 375-amino-acid chain; its full sequence is Succinyl-diaminopimelate desuccinylase (375 aa).

Histidine 66 contacts Zn(2+). Aspartate 68 is an active-site residue. Aspartate 99 is a binding site for Zn(2+). The active-site Proton acceptor is glutamate 133. Residues glutamate 134, glutamate 162, and histidine 348 each contribute to the Zn(2+) site.

This sequence belongs to the peptidase M20A family. DapE subfamily. Homodimer. Zn(2+) is required as a cofactor. Requires Co(2+) as cofactor.

The catalysed reaction is N-succinyl-(2S,6S)-2,6-diaminopimelate + H2O = (2S,6S)-2,6-diaminopimelate + succinate. It functions in the pathway amino-acid biosynthesis; L-lysine biosynthesis via DAP pathway; LL-2,6-diaminopimelate from (S)-tetrahydrodipicolinate (succinylase route): step 3/3. Catalyzes the hydrolysis of N-succinyl-L,L-diaminopimelic acid (SDAP), forming succinate and LL-2,6-diaminopimelate (DAP), an intermediate involved in the bacterial biosynthesis of lysine and meso-diaminopimelic acid, an essential component of bacterial cell walls. This Yersinia pseudotuberculosis serotype O:1b (strain IP 31758) protein is Succinyl-diaminopimelate desuccinylase.